A 1906-amino-acid polypeptide reads, in one-letter code: MIIRVCIRCFIVLTLVLGIGGCNFFGINSGREPLPAVSPLTPPKLPDWIEQISPIGEAQPLNQIRIRFKEALIPVESLDSPEQQQLLQKFALWPPLPGQFRFLTPRMVGFQADKALPIATRLQVTLKAGLADLKNHRLDKDLSWTFNTQSINLTNLPGVNPIEKADAEPIDLQPKLQFTSNVELDLASVQEHLQLIPEGKNEGLRFQVTLNKEEKPLDKEEPLKKFDPSARNWIYNLRPQKNLKTATRYRLVFSPGIRPAYGNLVTDREFVSKLSTYSPLAFQKINFYGQPDAGGTYGRFIKGSPQLEFNNILVAESAKTNIKINPAPKDISRLLQVNDEDRIIGINPYALEPAKTYTITIGENLQDKFGQTLGKPVSLKYDTGDLAGDIWVPSDLNIFPAGKDLRLNISTVNLPESKYQAAYRVVKPTDLVYFNYGNDLLPKPAEWKSFQVSGKKNQSVDVTVPLREKINAKTGMLAYGVQARTNKYQENGKELWREPTTYGLVELTNLGVFSQWFPESGLIRVNHLTDGAPVKAAVIEIYQSKLQAKSRPEPVPCATGKTDENGTFRVNREALQQCTAGSQNSIKSPELLVIASEKEDWAFTRTEEYSGVYGYGIDAGWQGNKPESRGVIFSDRQLYQSGEKAWFTGFADYLQNGVIQQDKNADYQITLVNPDGQKTSLGTQTTNEFGTFSLEMPINKTQGLGYYTIQAKGKNGLEISGEFRVAEFKPPNFKVEVKLDKEFAYIGDDVDINATSNYLFGAPVEGGEAKYFITRQQANFIPKGWEEFTFGRQWFWPEEAPTISSDVLQSNSQLDGNDKSSQMVNVAKDLPYPMTYRVDVQVADVSNLSVANSQSFTALPSNRLIGLKSNFIADAGKAFPIEVIIADPTGKLITGQRVRLELQQIKYSSVTQLVEGSQTPKNQVEYKTVAQTEITSTSNPQSVNLTPPESGTYRIRVNFSDAKNELGATDSQIWVTGGNAVFWGTRDKDVLEVKLDKKEYKAGETATALIQSPYADAELYFAVIKDKPIYQQITKVQGSAPQIQFRVTPEMLPNAAVEAVLVRQGKPINQVEVGSLDNLVKIGFTPFKVNLEDKYLKLQVKPAQASLEPGAEETIQLEVKDNQGNPTKGQLTVMVVNEAVLQLSGYRPPNLVDTVYAEQPISTRFTDNRPDVILQPQDVAKPKGWGYGGGFSTGAANTRTRTDFQPLAYYNGSVLTDASGNAQITVKLPDDLTTWRVMAVATDGNLRFGNGDATFITTKPLLSNAILPQFVRPGDRILAGLSVTNNTGNTGNLSINGEISGAVKFNSKNPTTTTLQTQAESATQAYRFPMVADSVGVGKVRFTTQLNGTADAFELPLQVKPLEITEQIVETGVSQKQIKIPLNVDKNTFPEAGGLDIQLASTLIPEIKAPAKQVLTDNDLPFTEPSASQLIIATNLQTIAQKYGQTFAEFNSRQQANLAVEKLQKLQISDGGFAAFPGQEKSDPWVSAYSVESLVKASQVFPNLVDTGMLSRLKTYLQKVLANPGEYDFCKQQLCKRQLQLNALIALSELGDKRNTFLTDIYEQRNNFDLVTQIKLARYLSQFPEWQDESQQLVNKLQQNISETGRTAVVSLPPSWGWMSSPTTAQAQALRLFIAKQSKPEIIDKLLQSLLALRRDGTWQTDYNNAQALTALVEYGQLQPTPPNFVATVQLAGRKLGENRFTGYKNPSLQLSVPMNQLPRGRHDLTLQKSGNGTLHYLVAYNYRLQGNQPGRFNGLRITREISQVNAKRILRKTGIYALDQPLTLALGQVFDIGLEIIVDRPVDHLVIKDPLPAGLEAVDASFQTTTAALQAKADSWELGFRNIYSDRIIAYADHLEPGVYSLHYLVRSVTPGTFSWPGAEVHLQYAPEEFGRTAEMKLIVEEKGR.

The N-terminal stretch at 1 to 21 (MIIRVCIRCFIVLTLVLGIGG) is a signal peptide. Residue C22 is the site of N-palmitoyl cysteine attachment. The S-diacylglycerol cysteine moiety is linked to residue C22.

The protein belongs to the protease inhibitor I39 (alpha-2-macroglobulin) family. Bacterial alpha-2-macroglobulin subfamily.

It localises to the cell membrane. The protein is Alpha-2-macroglobulin homolog of Nostoc sp. (strain PCC 7120 / SAG 25.82 / UTEX 2576).